The following is a 236-amino-acid chain: Uridylate kinase (236 aa).

10–13 (KLSG) contacts ATP. UMP is bound at residue Gly-52. Residues Gly-53 and Arg-57 each coordinate ATP. UMP-binding positions include Asp-72 and 133–140 (TGNPFFTT). Residues Thr-160, Tyr-166, and Asp-169 each contribute to the ATP site.

This sequence belongs to the UMP kinase family. Homohexamer.

It localises to the cytoplasm. It carries out the reaction UMP + ATP = UDP + ADP. It functions in the pathway pyrimidine metabolism; CTP biosynthesis via de novo pathway; UDP from UMP (UMPK route): step 1/1. Its activity is regulated as follows. Inhibited by UTP. In terms of biological role, catalyzes the reversible phosphorylation of UMP to UDP. The polypeptide is Uridylate kinase (Cupriavidus necator (strain ATCC 17699 / DSM 428 / KCTC 22496 / NCIMB 10442 / H16 / Stanier 337) (Ralstonia eutropha)).